Reading from the N-terminus, the 771-residue chain is UPF0313 protein PSPTO_4928 (771 aa).

The region spanning 371–649 is the Radical SAM core domain; it reads AYDMIRFSVN…KAFLRYHDPK (279 aa). Residues Cys385, Cys389, and Cys392 each coordinate [4Fe-4S] cluster. Residues 683–771 form a disordered region; sequence DTYQSARRKN…KPARKPVVPR (89 aa). Composition is skewed to basic and acidic residues over residues 726–735 and 745–754; these read KPWDKREEAK and AAKERMDAAK. Residues 756–765 are compositionally biased toward basic residues; that stretch reads GKGKGGKPAR.

Belongs to the UPF0313 family. Requires [4Fe-4S] cluster as cofactor.

In Pseudomonas syringae pv. tomato (strain ATCC BAA-871 / DC3000), this protein is UPF0313 protein PSPTO_4928.